A 535-amino-acid chain; its full sequence is Inositol 1,4,5-trisphosphate receptor-interacting protein-like 2 (535 aa).

The first 38 residues, 1 to 38, serve as a signal peptide directing secretion; the sequence is MSVHYTLNLRVFWPLVTGLCTALVCLYHVLRGSGGARA. The Extracellular segment spans residues 39–43; the sequence is EPADG. Residues 44 to 64 form a helical membrane-spanning segment; sequence VDGGFPLLKVAVLLLLSYVLL. The Cytoplasmic portion of the chain corresponds to 65–535; it reads RCRHAVRQRF…RTQGFLEGEP (471 aa). A Phosphoserine modification is found at Ser-139.

Belongs to the ITPRIP family.

Its subcellular location is the membrane. In Homo sapiens (Human), this protein is Inositol 1,4,5-trisphosphate receptor-interacting protein-like 2 (ITPRIPL2).